The primary structure comprises 473 residues: FAD-dependent urate hydroxylase (473 aa).

It belongs to the HpyO family. Homodimer. The cofactor is FAD.

It carries out the reaction urate + NADH + O2 + H(+) = 5-hydroxyisourate + NAD(+) + H2O. It catalyses the reaction urate + NADPH + O2 + H(+) = 5-hydroxyisourate + NADP(+) + H2O. It participates in purine metabolism; urate degradation. Its function is as follows. Catalyzes the hydroxylation of urate to 5-hydroxyisourate (HIU). Is likely to be involved in the urate degradation pathway to allantoin. Is slightly more efficient (about 2.6 times) with NADPH than NADH as the electron donor. This chain is FAD-dependent urate hydroxylase, found in Xanthomonas campestris pv. campestris (strain ATCC 33913 / DSM 3586 / NCPPB 528 / LMG 568 / P 25).